The following is a 61-amino-acid chain: Small ribosomal subunit protein uS14 (61 aa).

Residues Cys24, Cys27, Cys40, and Cys43 each coordinate Zn(2+).

This sequence belongs to the universal ribosomal protein uS14 family. Zinc-binding uS14 subfamily. In terms of assembly, part of the 30S ribosomal subunit. Contacts proteins S3 and S10. It depends on Zn(2+) as a cofactor.

In terms of biological role, binds 16S rRNA, required for the assembly of 30S particles and may also be responsible for determining the conformation of the 16S rRNA at the A site. This is Small ribosomal subunit protein uS14 from Roseiflexus sp. (strain RS-1).